A 405-amino-acid chain; its full sequence is L-carnitine CoA-transferase (405 aa).

CoA contacts are provided by Lys-97 and Arg-104. The active-site Nucleophile is the Asp-169.

The protein belongs to the CoA-transferase III family. CaiB subfamily. Homodimer.

It is found in the cytoplasm. The enzyme catalyses crotonobetainyl-CoA + (R)-carnitine = crotonobetaine + (R)-carnitinyl-CoA. It catalyses the reaction 4-(trimethylamino)butanoyl-CoA + (R)-carnitine = (R)-carnitinyl-CoA + 4-(trimethylamino)butanoate. It participates in amine and polyamine metabolism; carnitine metabolism. Catalyzes the reversible transfer of the CoA moiety from gamma-butyrobetainyl-CoA to L-carnitine to generate L-carnitinyl-CoA and gamma-butyrobetaine. Is also able to catalyze the reversible transfer of the CoA moiety from gamma-butyrobetainyl-CoA or L-carnitinyl-CoA to crotonobetaine to generate crotonobetainyl-CoA. This Escherichia coli O127:H6 (strain E2348/69 / EPEC) protein is L-carnitine CoA-transferase.